Reading from the N-terminus, the 196-residue chain is UMP-CMP kinase (196 aa).

13 to 18 is an ATP binding site; that stretch reads GAGKGT. A Phosphoserine modification is found at Ser-33. Residues 33–63 form an NMP region; the sequence is SAGELLRDERKNPDSQYGELIEKYIKEGKIV. Residue Arg-39 participates in a ribonucleoside 5'-phosphate binding. N6-acetyllysine occurs at positions 43 and 55. 61–63 contacts a ribonucleoside 5'-phosphate; it reads KIV. Lys-73 participates in a covalent cross-link: Glycyl lysine isopeptide (Lys-Gly) (interchain with G-Cter in SUMO2). 93–96 lines the a ribonucleoside 5'-phosphate pocket; the sequence is GFPR. Position 100 (Asn-100) interacts with CMP. The residue at position 106 (Lys-106) is an N6-succinyllysine. Positions 133–143 are LID; it reads ERGKSSGRSDD. An ATP-binding site is contributed by Arg-134. A ribonucleoside 5'-phosphate contacts are provided by Arg-140 and Arg-151. Lys-179 provides a ligand contact to ATP. Ser-180 carries the post-translational modification Phosphoserine.

Belongs to the adenylate kinase family. UMP-CMP kinase subfamily. As to quaternary structure, monomer. The cofactor is Mg(2+).

The protein resides in the nucleus. Its subcellular location is the cytoplasm. The catalysed reaction is CMP + ATP = CDP + ADP. The enzyme catalyses dCMP + ATP = dCDP + ADP. It carries out the reaction UMP + ATP = UDP + ADP. It catalyses the reaction a 2'-deoxyribonucleoside 5'-diphosphate + ATP = a 2'-deoxyribonucleoside 5'-triphosphate + ADP. The catalysed reaction is a ribonucleoside 5'-diphosphate + ATP = a ribonucleoside 5'-triphosphate + ADP. Catalyzes the phosphorylation of pyrimidine nucleoside monophosphates at the expense of ATP. Plays an important role in de novo pyrimidine nucleotide biosynthesis. Has preference for UMP and CMP as phosphate acceptors. Also displays broad nucleoside diphosphate kinase activity. The sequence is that of UMP-CMP kinase (Cmpk1) from Rattus norvegicus (Rat).